Consider the following 81-residue polypeptide: Short neurotoxin 1 (81 aa).

The signal sequence occupies residues 1–21; that stretch reads MKTLLLTLVVVTIVCLDLGYT. Cystine bridges form between C24–C43, C38–C60, C62–C73, and C74–C79.

Belongs to the three-finger toxin family. Short-chain subfamily. Type I alpha-neurotoxin sub-subfamily. As to expression, expressed by the venom gland.

The protein resides in the secreted. Its function is as follows. Binds to muscle nicotinic acetylcholine receptor (nAChR) and inhibit acetylcholine from binding to the receptor, thereby impairing neuromuscular transmission. This chain is Short neurotoxin 1, found in Hoplocephalus stephensii (Stephens's banded snake).